A 533-amino-acid polypeptide reads, in one-letter code: MKKNLKILVITGGVISGIGKGVTSASIARLFRYDFRVTPIKCDGYLNTDPGTINPVEHGEVFVLDDGGEVDMDFGHYERFLNLNAKSSWNITMGKIYKKILENERKGKYLGRTVQLIPHVTDEIKSTIFQIASSENSEMLIIEIGGTVGDMENILFIETVRQIRHEVGSGNIAFIHLTYVPSPVGINEQKSKPTQQSVKTLNKAGIFPDLIIARSSQVLTDQIRKKIAMFCNVESTSIIDNIDVSTIYEIPISFYKQGVHEILSSKLNIKVDPKIEELSRLVGIIKSNFFVPKKIINIAICGKYAELDDSYASIRESLVHVAANLDLLIKSTLIDSNDLNESCLKDFDGIIVPGGFGGKGYEGKIIAIKYARENNIPFLGICLGLQLAVIEFARNVCGILDADTEENLIKDKPLKNPVIHLLPEQKEIKDKGATMRLGGYPVILKKNTIAFKLYGQDRIIERFRHRYEVNNDYIDLFEKNGLIVSGFSSDFKIAKLIEIPKNKFFVACQFHPELITRIENPAKLFLGLIKACI.

Residues 1–269 (MKKNLKILVI…HEILSSKLNI (269 aa)) form an amidoligase domain region. Residue serine 16 participates in CTP binding. Serine 16 lines the UTP pocket. Residues 17-22 (GIGKGV) and aspartate 73 each bind ATP. Mg(2+)-binding residues include aspartate 73 and glutamate 143. CTP is bound by residues 150–152 (DME), 190–195 (KSKPTQ), and lysine 226. UTP contacts are provided by residues 190–195 (KSKPTQ) and lysine 226. Residues 304–533 (YAELDDSYAS…LFLGLIKACI (230 aa)) enclose the Glutamine amidotransferase type-1 domain. Residue glycine 355 coordinates L-glutamine. Cysteine 382 serves as the catalytic Nucleophile; for glutamine hydrolysis. L-glutamine-binding positions include 383-386 (LGLQ), glutamate 406, and arginine 466. Catalysis depends on residues histidine 511 and glutamate 513.

It belongs to the CTP synthase family. Homotetramer.

It catalyses the reaction UTP + L-glutamine + ATP + H2O = CTP + L-glutamate + ADP + phosphate + 2 H(+). It carries out the reaction L-glutamine + H2O = L-glutamate + NH4(+). The enzyme catalyses UTP + NH4(+) + ATP = CTP + ADP + phosphate + 2 H(+). The protein operates within pyrimidine metabolism; CTP biosynthesis via de novo pathway; CTP from UDP: step 2/2. Its activity is regulated as follows. Allosterically activated by GTP, when glutamine is the substrate; GTP has no effect on the reaction when ammonia is the substrate. The allosteric effector GTP functions by stabilizing the protein conformation that binds the tetrahedral intermediate(s) formed during glutamine hydrolysis. Inhibited by the product CTP, via allosteric rather than competitive inhibition. Catalyzes the ATP-dependent amination of UTP to CTP with either L-glutamine or ammonia as the source of nitrogen. Regulates intracellular CTP levels through interactions with the four ribonucleotide triphosphates. This is CTP synthase from Borreliella afzelii (strain PKo) (Borrelia afzelii).